The following is a 296-amino-acid chain: Endochitinase 3 (296 aa).

One can recognise a GH18 domain in the interval 12–296 (HKLTVYWGAE…VKNGQLPEED (285 aa)). Asparagine 32 and asparagine 152 each carry an N-linked (GlcNAc...) asparagine glycan. Glutamate 153 (proton donor) is an active-site residue. Asparagine 228 is a glycosylation site (N-linked (GlcNAc...) asparagine).

This sequence belongs to the glycosyl hydrolase 18 family. Chitinase class III subfamily.

The protein resides in the secreted. The enzyme catalyses Random endo-hydrolysis of N-acetyl-beta-D-glucosaminide (1-&gt;4)-beta-linkages in chitin and chitodextrins.. Its function is as follows. Secreted chitinase involved in the degradation of chitin, a component of the cell walls of fungi and exoskeletal elements of some animals (including worms and arthropods). Participates in the infection process and directly acts in the penetration process of the host cuticle. Involved in heat-shock adaptation. The chain is Endochitinase 3 (chi3) from Metarhizium anisopliae (Entomophthora anisopliae).